Reading from the N-terminus, the 390-residue chain is Zinc transporter 7-B (390 aa).

Topologically, residues 1–37 (MLPLSIKDDEYKPPKFNLVRKVSGWIRSIFSDSTSRN) are cytoplasmic. The helical transmembrane segment at 38 to 58 (LFCFLCLNLSFAFVELFYGIW) threads the bilayer. The Lumenal portion of the chain corresponds to 59 to 67 (SNSLGLISD). Residues 68-88 (SFHMFFDCTALLAGLAASVIS) traverse the membrane as a helical segment. At 89–102 (RWKTNETFSYGYVR) the chain is on the cytoplasmic side. Residues 103–123 (AEVLAGFVNGLFLIFTAFFIF) traverse the membrane as a helical segment. Over 124–140 (SEGIERALDTPEVHHER) the chain is Lumenal. A helical transmembrane segment spans residues 141–161 (LLPVSIMGFLVNLIGIFVFQH). The his-rich loop stretch occupies residues 161-226 (HGGGHGHSHE…GHDHSHKHGH (66 aa)). Over 162-250 (GGGHGHSHES…KGSSKQILEG (89 aa)) the chain is Cytoplasmic. The interval 166–243 (GHSHESGHGH…DEPPEENKGS (78 aa)) is disordered. Residues 187 to 201 (GHSHSHGGGHGHSHG) show a composition bias toward basic residues. Composition is skewed to basic and acidic residues over residues 202-218 (GGHEHGHSHGGGHEHGH) and 232-242 (CHDEPPEENKG). A helical membrane pass occupies residues 251-271 (VFLHIVADALGSVGVIISTIL). The Lumenal portion of the chain corresponds to 272-276 (MQQYG). The helical transmembrane segment at 277 to 297 (LMIADPICSMLIALLIFVSVI) threads the bilayer. Residues 298-390 (PLLKQSIGIL…LYVQIDLAAM (93 aa)) lie on the Cytoplasmic side of the membrane.

This sequence belongs to the cation diffusion facilitator (CDF) transporter (TC 2.A.4) family. SLC30A subfamily. Homooligomer.

The protein localises to the golgi apparatus membrane. It localises to the cytoplasmic vesicle. Its subcellular location is the golgi apparatus. It is found in the trans-Golgi network. The protein resides in the sarcoplasmic reticulum. The protein localises to the mitochondrion. It carries out the reaction Zn(2+)(in) = Zn(2+)(out). Functionally, zinc ion transporter mediating zinc entry from the cytosol into the lumen of organelles along the secretory pathway. By contributing to zinc ion homeostasis within the early secretory pathway, regulates the activation and folding of enzymes like alkaline phosphatases. The polypeptide is Zinc transporter 7-B (slc30a7-b) (Xenopus laevis (African clawed frog)).